Reading from the N-terminus, the 204-residue chain is Octanoyltransferase (204 aa).

Residues 27–202 (QGGEEALLLL…RFQPLLNLHL (176 aa)) form the BPL/LPL catalytic domain. Residues 65 to 72 (RGGDVTYH), 132 to 134 (SIG), and 145 to 147 (GFA) contribute to the substrate site. Cys163 acts as the Acyl-thioester intermediate in catalysis.

The protein belongs to the LipB family.

The protein localises to the cytoplasm. The catalysed reaction is octanoyl-[ACP] + L-lysyl-[protein] = N(6)-octanoyl-L-lysyl-[protein] + holo-[ACP] + H(+). The protein operates within protein modification; protein lipoylation via endogenous pathway; protein N(6)-(lipoyl)lysine from octanoyl-[acyl-carrier-protein]: step 1/2. Its function is as follows. Catalyzes the transfer of endogenously produced octanoic acid from octanoyl-acyl-carrier-protein onto the lipoyl domains of lipoate-dependent enzymes. Lipoyl-ACP can also act as a substrate although octanoyl-ACP is likely to be the physiological substrate. The protein is Octanoyltransferase of Citrifermentans bemidjiense (strain ATCC BAA-1014 / DSM 16622 / JCM 12645 / Bem) (Geobacter bemidjiensis).